Consider the following 296-residue polypeptide: MELSRSSQREMMDVAVDAEDNAFDTGDHRLFARMPSSVSFNKLRKRLLRQVRQAFDGFGMLKGSKRWLVGVSGGKDSYSLLALLMDLKWRGLLPVELIACNLDQGQPNFPKHILPDYLASIGVRHRIEYRDTYSIVKEKVPTGATYCSLCSRLRRGNLYRIAREEGCDALVLGHHREDILETFFMNFFHGGRLASMPAKLLNDEGDLTVLRPLTYAAEDDLAKFAAAMEFPIIPCDLCGSQDGLERNAMKAMLADIERRMPGRKDTMLRALGHVNPSHLLDPKLFDFQSLSPEPKE.

The PP-loop motif signature appears at 72–77 (SGGKDS). Residues cysteine 147, cysteine 150, and cysteine 238 each coordinate [4Fe-4S] cluster.

The protein belongs to the TtcA family. Homodimer. It depends on Mg(2+) as a cofactor. The cofactor is [4Fe-4S] cluster.

It is found in the cytoplasm. It catalyses the reaction cytidine(32) in tRNA + S-sulfanyl-L-cysteinyl-[cysteine desulfurase] + AH2 + ATP = 2-thiocytidine(32) in tRNA + L-cysteinyl-[cysteine desulfurase] + A + AMP + diphosphate + H(+). The protein operates within tRNA modification. Catalyzes the ATP-dependent 2-thiolation of cytidine in position 32 of tRNA, to form 2-thiocytidine (s(2)C32). The sulfur atoms are provided by the cysteine/cysteine desulfurase (IscS) system. This chain is tRNA-cytidine(32) 2-sulfurtransferase, found in Sinorhizobium fredii (strain NBRC 101917 / NGR234).